We begin with the raw amino-acid sequence, 776 residues long: Genome polyprotein (776 aa).

The disordered stretch occupies residues 1–27 (MAGKAVLKGKGGGPPRRASKVAPKKTR). Residues 1–98 (MAGKAVLKGK…LHRRGSRRTT (98 aa)) lie on the Cytoplasmic side of the membrane. Residues 17–27 (RASKVAPKKTR) show a composition bias toward basic residues. The tract at residues 33–68 (MPNGLVLMRMLGVLWHALTGTARSPVLKAFWKVVPL) is hydrophobic; homodimerization of capsid protein C. A propeptide spans 97–117 (TTIDWMTPLLITVMLGMCLTA) (ER anchor for the protein C, removed in mature form by serine protease NS3). A helical transmembrane segment spans residues 99-117 (IDWMTPLLITVMLGMCLTA). The Extracellular segment spans residues 118 to 242 (TVRRERDGSM…HLTRVEGWVW (125 aa)). An N-linked (GlcNAc...) asparagine; by host glycan is attached at asparagine 144. Residues 243 to 260 (KNKLFTLSLVMVAWLMVD) traverse the membrane as a helical segment. Position 261 (glycine 261) is a topological domain, cytoplasmic. Residues 262-280 (LLPRILIVVVALALVPAYA) traverse the membrane as a helical segment. Topologically, residues 281 to 727 (SRCTHLENRD…HTVLGGAFNT (447 aa)) are extracellular. Intrachain disulfides connect cysteine 283/cysteine 310, cysteine 340/cysteine 396, cysteine 354/cysteine 385, and cysteine 372/cysteine 401. An N-linked (GlcNAc...) asparagine; by host glycan is attached at asparagine 434. Disulfide bonds link cysteine 466–cysteine 570 and cysteine 587–cysteine 618. Positions 728 to 748 (LLGGVGFLPKILLGVAMAWLG) form an intramembrane region, helical. Residues 749–755 (LNMRNPT) lie on the Extracellular side of the membrane. Positions 756-776 (LSMGFLLSGGLVLAMTLGVGA) form an intramembrane region, helical.

In terms of processing, specific enzymatic cleavages in vivo yield mature proteins Peptide 2K acts as a signal sequence and is removed from the N-terminus of NS4B by the host signal peptidase in the ER lumen. Signal cleavage at the 2K-4B site requires a prior NS3 protease-mediated cleavage at the 4A-2K site.

The protein localises to the virion. Its subcellular location is the secreted. It localises to the virion membrane. It is found in the host endoplasmic reticulum membrane. In terms of biological role, capsid protein C self-assembles to form an icosahedral capsid about 30 nm in diameter. The capsid encapsulates the genomic RNA. PrM acts as a chaperone for envelope protein E during intracellular virion assembly by masking and inactivating envelope protein E fusion peptide. prM is matured in the last step of virion assembly, presumably to avoid catastrophic activation of the viral fusion peptide induced by the acidic pH of the trans-Golgi network. After cleavage by host furin, the pr peptide is released in the extracellular medium and small envelope protein M and envelope protein E homodimers are dissociated. Its function is as follows. Envelope protein E binding to host cell surface receptor is followed by virus internalization through clathrin-mediated endocytosis. Envelope protein E is subsequently involved in membrane fusion between virion and host late endosomes. Synthesized as a homodimer with prM which acts as a chaperone for envelope protein E. After cleavage of prM, envelope protein E dissociate from small envelope protein M and homodimerizes. This is Genome polyprotein from Homo sapiens (Human).